Reading from the N-terminus, the 432-residue chain is Adenylosuccinate synthetase (432 aa).

GTP contacts are provided by residues 12–18 (GDEGKGK) and 40–42 (GHT). The Proton acceptor role is filled by aspartate 13. Mg(2+) is bound by residues aspartate 13 and glycine 40. IMP-binding positions include 13–16 (DEGK), 38–41 (NAGH), threonine 129, arginine 143, glutamine 224, threonine 239, and arginine 303. Histidine 41 serves as the catalytic Proton donor. Residue 299–305 (VTTGRRR) coordinates substrate. GTP-binding positions include arginine 305, 331–333 (KLD), and 413–415 (GVG).

Belongs to the adenylosuccinate synthetase family. Homodimer. Mg(2+) serves as cofactor.

The protein resides in the cytoplasm. The enzyme catalyses IMP + L-aspartate + GTP = N(6)-(1,2-dicarboxyethyl)-AMP + GDP + phosphate + 2 H(+). It participates in purine metabolism; AMP biosynthesis via de novo pathway; AMP from IMP: step 1/2. Functionally, plays an important role in the de novo pathway of purine nucleotide biosynthesis. Catalyzes the first committed step in the biosynthesis of AMP from IMP. This Mycobacterium tuberculosis (strain CDC 1551 / Oshkosh) protein is Adenylosuccinate synthetase.